Consider the following 457-residue polypeptide: Fibrinogen C domain-containing protein 1-A (457 aa).

The disordered stretch occupies residues 1–20 (MGSDRWKNIGGTPQMEDSAQ). Topologically, residues 1-33 (MGSDRWKNIGGTPQMEDSAQEKTQRKGCGYILC) are cytoplasmic. The helical; Signal-anchor for type II membrane protein transmembrane segment at 34–54 (TVLLSVAVLLAVTVTGAVLFM) threads the bilayer. Residues 55–457 (NHYHAPSTEP…MKIRPQREEN (403 aa)) lie on the Extracellular side of the membrane. The segment at 216–235 (ADLQRAPSRNSRPRGCANGS) is disordered. A Fibrinogen C-terminal domain is found at 231 to 454 (CANGSKPRDC…FTEMKIRPQR (224 aa)). An N-linked (GlcNAc...) asparagine glycan is attached at Asn-233. Residues Cys-240 and Cys-269 are joined by a disulfide bond. The N-linked (GlcNAc...) asparagine glycan is linked to Asn-336. Residues Asp-389 and Asp-391 each contribute to the Ca(2+) site. A disulfide bridge links Cys-397 with Cys-410.

Homotetramer; disulfide-linked.

Its subcellular location is the membrane. Functionally, acetyl group-binding receptor which shows a calcium-dependent binding to acetylated structures such as chitin, some N-acetylated carbohydrates, and amino acids. This chain is Fibrinogen C domain-containing protein 1-A (fibcd1-a), found in Xenopus laevis (African clawed frog).